A 128-amino-acid polypeptide reads, in one-letter code: Aspartate 1-decarboxylase (128 aa).

Ser-25 functions as the Schiff-base intermediate with substrate; via pyruvic acid in the catalytic mechanism. Position 25 is a pyruvic acid (Ser) (Ser-25). Thr-57 contributes to the substrate binding site. Tyr-58 acts as the Proton donor in catalysis. Residue 73-75 (GSA) coordinates substrate.

This sequence belongs to the PanD family. Heterooctamer of four alpha and four beta subunits. It depends on pyruvate as a cofactor. Is synthesized initially as an inactive proenzyme, which is activated by self-cleavage at a specific serine bond to produce a beta-subunit with a hydroxyl group at its C-terminus and an alpha-subunit with a pyruvoyl group at its N-terminus.

It is found in the cytoplasm. It carries out the reaction L-aspartate + H(+) = beta-alanine + CO2. Its pathway is cofactor biosynthesis; (R)-pantothenate biosynthesis; beta-alanine from L-aspartate: step 1/1. Functionally, catalyzes the pyruvoyl-dependent decarboxylation of aspartate to produce beta-alanine. The chain is Aspartate 1-decarboxylase from Burkholderia mallei (strain NCTC 10247).